The sequence spans 262 residues: MYIFKIAYDGKLSFQTQPHGETVCDKISNALLDCGYLDNKDRVPLYHGGRTDRGVAALGNYVVYEMDKKPVLPRVQSKLKWDGIWVLGCKKIEIFPEIEHRHYQYTLPNKNHDVELMKKASEKLIGTHYFQNLSKRDKTKVKDPVRTLYDIKISSNDYFITIDIFGESFLWNMVRRIIRLLSDIGKHKIENPEKFIELILSEDYKKGYPPSPAEGLILVDVKTNIDIDLDSYVIRNLKNSWEKSLNNSLMRLGLCKTVLSKT.

Asp52 serves as the catalytic Nucleophile. Tyr103 contributes to the substrate binding site.

The protein belongs to the tRNA pseudouridine synthase TruA family.

It catalyses the reaction uridine(38/39/40) in tRNA = pseudouridine(38/39/40) in tRNA. Functionally, formation of pseudouridine at positions 38, 39 and 40 in the anticodon stem and loop of transfer RNAs. The sequence is that of tRNA pseudouridine synthase A from Methanococcus maripaludis (strain DSM 14266 / JCM 13030 / NBRC 101832 / S2 / LL).